The primary structure comprises 303 residues: Counting factor 50 (303 aa).

Positions 1–24 are cleaved as a signal peptide; the sequence is MNKMNNIFLIISSIILSIVIFVSG. The 213-residue stretch at 28–240 folds into the Ch-type lysozyme domain; sequence IDFSSEISVG…CSTSSGSASG (213 aa). Asn67 is a glycosylation site (N-linked (GlcNAc...) asparagine). Glu125 is a catalytic residue. An N-linked (GlcNAc...) asparagine glycan is attached at Asn170. Residues 226 to 303 are S-G-S motif repeats; that stretch reads GSGSGCSTSS…GSGTGSGSSI (78 aa). Residues 236–292 show a composition bias toward low complexity; that stretch reads GSASGSASGSASGSASGSNSGSSNSGSSNSGSSNSGSNSGSSNSGSGNSGSSNSGSA. Residues 236–303 are disordered; it reads GSASGSASGS…GSGTGSGSSI (68 aa). Positions 293–303 are enriched in gly residues; sequence SGSGTGSGSSI.

It belongs to the glycosyl hydrolase 25 family. As to quaternary structure, monomer. Component of the counting factor (CF) complex, which includes cf60, cf50, cf45-1 and ctnA.

It is found in the secreted. It carries out the reaction Hydrolysis of (1-&gt;4)-beta-linkages between N-acetylmuramic acid and N-acetyl-D-glucosamine residues in a peptidoglycan and between N-acetyl-D-glucosamine residues in chitodextrins.. Cell-counting factor that limits the maximum size of the multicellular structure during aggregation. Has a very low lysozyme activity. The chain is Counting factor 50 (cf50-1) from Dictyostelium discoideum (Social amoeba).